Here is a 330-residue protein sequence, read N- to C-terminus: MRIRYGWELALAALLVIEIVAFGAINPRMLDLNMLLFSTSDFICIGIVALPLTMVIVSGGIDISFGSTIGLCAIALGVLFQSGVPMPLAILLTLLLGALCGLINAGLIIYTKVNPLVITLGTLYLFAGSALLLSGMAGATGYEGIGGFPMAFTDFANLDVLGLPVPLIIFLICLLVFWLWLHKTHAGRNVFLIGQSPRVALYSAIPVNRTLCALYAMTGLASAVAAVLLVSYFGSARSDLGASFLMPAITAVVLGGANIYGGSGSIIGTAIAVLLVGYLQQGLQMAGVPNQVSSALSGALLIVVVVGRSVSLHRQQIKEWLARRANNPLP.

Residues 1–4 are Cytoplasmic-facing; that stretch reads MRIR. The helical transmembrane segment at 5–25 threads the bilayer; it reads YGWELALAALLVIEIVAFGAI. Over 26-42 the chain is Periplasmic; sequence NPRMLDLNMLLFSTSDF. The chain crosses the membrane as a helical span at residues 43 to 63; that stretch reads ICIGIVALPLTMVIVSGGIDI. The Cytoplasmic segment spans residues 64–67; it reads SFGS. The next 2 helical transmembrane spans lie at 68–88 and 89–109; these read TIGL…PMPL and AILL…GLII. Residues 110–115 lie on the Cytoplasmic side of the membrane; the sequence is YTKVNP. Residues 116 to 136 traverse the membrane as a helical segment; it reads LVITLGTLYLFAGSALLLSGM. Residues 137-159 lie on the Periplasmic side of the membrane; it reads AGATGYEGIGGFPMAFTDFANLD. Residues 160-180 traverse the membrane as a helical segment; it reads VLGLPVPLIIFLICLLVFWLW. Topologically, residues 181–209 are cytoplasmic; it reads LHKTHAGRNVFLIGQSPRVALYSAIPVNR. The chain crosses the membrane as a helical span at residues 210-230; the sequence is TLCALYAMTGLASAVAAVLLV. Over 231–237 the chain is Periplasmic; that stretch reads SYFGSAR. Transmembrane regions (helical) follow at residues 238–258 and 259–279; these read SDLG…GGAN and IYGG…VGYL. Residues 280–285 are Periplasmic-facing; that stretch reads QQGLQM. The helical transmembrane segment at 286-306 threads the bilayer; that stretch reads AGVPNQVSSALSGALLIVVVV. Residues 307 to 330 are Cytoplasmic-facing; it reads GRSVSLHRQQIKEWLARRANNPLP.

The protein belongs to the binding-protein-dependent transport system permease family. AraH/RbsC subfamily. As to quaternary structure, the complex is composed of two ATP-binding proteins (LsrA), two transmembrane proteins (LsrC and LsrD) and a solute-binding protein (LsrB).

It localises to the cell inner membrane. Its function is as follows. Part of the ABC transporter complex LsrABCD involved in autoinducer 2 (AI-2) import. Probably responsible for the translocation of the substrate across the membrane. In Shigella flexneri serotype 5b (strain 8401), this protein is Autoinducer 2 import system permease protein LsrD (lsrD).